Reading from the N-terminus, the 133-residue chain is Small ribosomal subunit protein uS8 (133 aa).

Belongs to the universal ribosomal protein uS8 family. In terms of assembly, part of the 30S ribosomal subunit.

In terms of biological role, one of the primary rRNA binding proteins, it binds directly to 16S rRNA central domain where it helps coordinate assembly of the platform of the 30S subunit. In Metallosphaera sedula (strain ATCC 51363 / DSM 5348 / JCM 9185 / NBRC 15509 / TH2), this protein is Small ribosomal subunit protein uS8.